Consider the following 309-residue polypeptide: Tagatose-6-phosphate kinase (309 aa).

It belongs to the carbohydrate kinase PfkB family. LacC subfamily.

The catalysed reaction is D-tagatofuranose 6-phosphate + ATP = D-tagatofuranose 1,6-bisphosphate + ADP + H(+). It participates in carbohydrate metabolism; D-tagatose 6-phosphate degradation; D-glyceraldehyde 3-phosphate and glycerone phosphate from D-tagatose 6-phosphate: step 1/2. The chain is Tagatose-6-phosphate kinase from Streptococcus pyogenes serotype M18 (strain MGAS8232).